A 483-amino-acid chain; its full sequence is Glutamyl-tRNA(Gln) amidotransferase subunit A (483 aa).

Catalysis depends on charge relay system residues Lys76 and Ser151. Residue Ser175 is the Acyl-ester intermediate of the active site.

It belongs to the amidase family. GatA subfamily. As to quaternary structure, heterotrimer of A, B and C subunits.

It catalyses the reaction L-glutamyl-tRNA(Gln) + L-glutamine + ATP + H2O = L-glutaminyl-tRNA(Gln) + L-glutamate + ADP + phosphate + H(+). Allows the formation of correctly charged Gln-tRNA(Gln) through the transamidation of misacylated Glu-tRNA(Gln) in organisms which lack glutaminyl-tRNA synthetase. The reaction takes place in the presence of glutamine and ATP through an activated gamma-phospho-Glu-tRNA(Gln). This Pseudomonas syringae pv. tomato (strain ATCC BAA-871 / DC3000) protein is Glutamyl-tRNA(Gln) amidotransferase subunit A.